The following is a 314-amino-acid chain: ATP synthase gamma chain (314 aa).

This sequence belongs to the ATPase gamma chain family. F-type ATPases have 2 components, CF(1) - the catalytic core - and CF(0) - the membrane proton channel. CF(1) has five subunits: alpha(3), beta(3), gamma(1), delta(1), epsilon(1). CF(0) has three main subunits: a, b and c.

Its subcellular location is the cellular thylakoid membrane. Its function is as follows. Produces ATP from ADP in the presence of a proton gradient across the membrane. The gamma chain is believed to be important in regulating ATPase activity and the flow of protons through the CF(0) complex. The chain is ATP synthase gamma chain from Synechocystis sp. (strain ATCC 27184 / PCC 6803 / Kazusa).